Consider the following 320-residue polypeptide: Beta-ketoacyl-[acyl-carrier-protein] synthase III (320 aa).

Catalysis depends on residues Cys-113 and His-247. Residues 248 to 252 are ACP-binding; that stretch reads QANRR. Asn-277 is an active-site residue.

Belongs to the thiolase-like superfamily. FabH family. As to quaternary structure, homodimer.

Its subcellular location is the cytoplasm. It carries out the reaction malonyl-[ACP] + acetyl-CoA + H(+) = 3-oxobutanoyl-[ACP] + CO2 + CoA. The protein operates within lipid metabolism; fatty acid biosynthesis. Functionally, catalyzes the condensation reaction of fatty acid synthesis by the addition to an acyl acceptor of two carbons from malonyl-ACP. Catalyzes the first condensation reaction which initiates fatty acid synthesis and may therefore play a role in governing the total rate of fatty acid production. Possesses both acetoacetyl-ACP synthase and acetyl transacylase activities. Its substrate specificity determines the biosynthesis of branched-chain and/or straight-chain of fatty acids. The polypeptide is Beta-ketoacyl-[acyl-carrier-protein] synthase III (Acidiphilium cryptum (strain JF-5)).